Reading from the N-terminus, the 428-residue chain is Enolase (428 aa).

Gln-163 contributes to the (2R)-2-phosphoglycerate binding site. The active-site Proton donor is Glu-205. The Mg(2+) site is built by Asp-242, Glu-284, and Asp-311. Lys-336, Arg-365, Ser-366, and Lys-387 together coordinate (2R)-2-phosphoglycerate. Lys-336 functions as the Proton acceptor in the catalytic mechanism.

The protein belongs to the enolase family. Requires Mg(2+) as cofactor.

It localises to the cytoplasm. It is found in the secreted. The protein localises to the cell surface. It catalyses the reaction (2R)-2-phosphoglycerate = phosphoenolpyruvate + H2O. It functions in the pathway carbohydrate degradation; glycolysis; pyruvate from D-glyceraldehyde 3-phosphate: step 4/5. Its function is as follows. Catalyzes the reversible conversion of 2-phosphoglycerate (2-PG) into phosphoenolpyruvate (PEP). It is essential for the degradation of carbohydrates via glycolysis. The chain is Enolase from Tropheryma whipplei (strain TW08/27) (Whipple's bacillus).